A 567-amino-acid chain; its full sequence is Geranylgeranyl transferase type-2 subunit alpha (567 aa).

6 PFTA repeats span residues 44–78 (LDES…QLET), 88–122 (LVKA…RLPE), 124–158 (NWTR…QAAV), 159–193 (PPAE…QLHP), 207–241 (VLLK…RADP), and 363–397 (VLQS…ALDP). A Phosphoserine modification is found at Ser98. LRR repeat units lie at residues 442–463 (EVRV…EQLL), 464–486 (LVTH…AALR), 487–508 (CLEV…TNLP), 509–530 (RLQE…QPLA), and 534–555 (RLVL…LEQL).

The protein belongs to the protein prenyltransferase subunit alpha family. Heterotrimer composed of RABGGTA, RABGGTB and CHM; within this trimer, RABGGTA and RABGGTB form the catalytic component B, while CHM (component A) mediates peptide substrate binding. The Rab GGTase dimer (RGGT) interacts with CHM (component A) prior to Rab protein binding; the association is stabilized by geranylgeranyl pyrophosphate (GGpp). The CHM:RGGT:Rab complex is destabilized by GGpp. Interacts with non-phosphorylated form of RAB8A; phosphorylation of RAB8A at 'Thr-72' disrupts this interaction.

It carries out the reaction geranylgeranyl diphosphate + L-cysteinyl-[protein] = S-geranylgeranyl-L-cysteinyl-[protein] + diphosphate. Its activity is regulated as follows. The enzymatic reaction requires the aid of a Rab escort protein (also called component A), such as CHM. In terms of biological role, catalyzes the transfer of a geranylgeranyl moiety from geranylgeranyl diphosphate to both cysteines of Rab proteins with the C-terminal sequence -XXCC, -XCXC and -CCXX, such as RAB1A, RAB3A, RAB5A and RAB7A. The sequence is that of Geranylgeranyl transferase type-2 subunit alpha (RABGGTA) from Homo sapiens (Human).